A 510-amino-acid chain; its full sequence is Glutamate--tRNA ligase (510 aa).

The 'HIGH' region signature appears at 15 to 25 (PSPTGDPHVGT). Positions 256–260 (KISKR) match the 'KMSKS' region motif. An ATP-binding site is contributed by Lys259.

The protein belongs to the class-I aminoacyl-tRNA synthetase family. Glutamate--tRNA ligase type 1 subfamily. In terms of assembly, monomer.

It is found in the cytoplasm. It carries out the reaction tRNA(Glu) + L-glutamate + ATP = L-glutamyl-tRNA(Glu) + AMP + diphosphate. Functionally, catalyzes the attachment of glutamate to tRNA(Glu) in a two-step reaction: glutamate is first activated by ATP to form Glu-AMP and then transferred to the acceptor end of tRNA(Glu). This is Glutamate--tRNA ligase from Fusobacterium nucleatum subsp. nucleatum (strain ATCC 25586 / DSM 15643 / BCRC 10681 / CIP 101130 / JCM 8532 / KCTC 2640 / LMG 13131 / VPI 4355).